We begin with the raw amino-acid sequence, 315 residues long: Protein OPG185 (315 aa).

A signal peptide spans 1–16; sequence MTRLPILLLLISLVYA. An Ig-like V-type domain is found at 17–121; sequence TPFPQTSKKI…NDTDKVDYEE (105 aa). Over 17–279 the chain is Virion surface; that stretch reads TPFPQTSKKI…SNYKTKDFVE (263 aa). An intrachain disulfide couples Cys-34 to Cys-103. 4 N-linked (GlcNAc...) asparagine; by host glycosylation sites follow: Asn-37, Asn-69, Asn-112, and Asn-161. Positions 194–213 are disordered; it reads TVSATSGESTTDETPEPITD. Asn-254 carries N-linked (GlcNAc...) asparagine; by host glycosylation. A helical membrane pass occupies residues 280-303; that stretch reads IFGITALIILSAVAIFCITYYICN. The Intravirion portion of the chain corresponds to 304-315; it reads KRSRKYKTENKV.

The protein belongs to the orthopoxvirus OPG185 family. As to quaternary structure, heterodimerizes with OPG040. The heterodimer OPG185-OPG040 interacts with components of the entry fusion complex OPG143 and OPG094. Heterodimer with C3/VPC protein; disulfide-linked. Post-translationally, glycosylated; contains phosphate and sulfate-substituted glycans. O-glycosylation is required for hemagglutination and hemadsorption activities of infected cell membranes.

It localises to the virion membrane. The protein localises to the host membrane. Prevents cell to cell fusion by interacting with and directing the viral OPG040 protein on the host plasma membrane. The OPG185-OPG040 complex associates with components of the entry fusion complex (EFC) presumably to avoid superinfection and syncytium formation. Via its interaction with C3/VCP protein, protects the infected cell and probably also the extracellular enveloped virus from complement attack. The polypeptide is Protein OPG185 (OPG185) (Vaccinia virus (strain Copenhagen) (VACV)).